A 308-amino-acid chain; its full sequence is tRNA dimethylallyltransferase (308 aa).

ATP is bound at residue 8 to 15; sequence GPTGTGKS. Position 10–15 (10–15) interacts with substrate; sequence TGTGKS.

It belongs to the IPP transferase family. As to quaternary structure, monomer. Requires Mg(2+) as cofactor.

The enzyme catalyses adenosine(37) in tRNA + dimethylallyl diphosphate = N(6)-dimethylallyladenosine(37) in tRNA + diphosphate. Catalyzes the transfer of a dimethylallyl group onto the adenine at position 37 in tRNAs that read codons beginning with uridine, leading to the formation of N6-(dimethylallyl)adenosine (i(6)A). This chain is tRNA dimethylallyltransferase, found in Mycolicibacterium vanbaalenii (strain DSM 7251 / JCM 13017 / BCRC 16820 / KCTC 9966 / NRRL B-24157 / PYR-1) (Mycobacterium vanbaalenii).